Reading from the N-terminus, the 327-residue chain is MVKKIGVLTSGGDAPGMNAAIRGVVRAALSAGLDVFGIEDGYLGLYENRMKKLDRYSVSDMINRGGTFLGSARFPEFRDPEVRKVALKNMHERGIDGLVVIGGDGSYAGADLLTKEGGIHCVGLPGTIDNDVAGTDYTIGFFTALETVVEAIDRLRDTSSSHQRISIVEVMGRYCGDLTLAAAIAGGCEFIAIPEVEFKRDDLVAEIKAGIAKGKKHAIVAITEKLDDIDSLAKYIEKETGRETRGTVLGHIQRGGAPVAYDRILASRMGSYAVDLLLQDHDYKKGGFCVGVQNEKMVHELISVCIAPENKKSKFKEDWYDTAKKLF.

Residue G12 coordinates ATP. ADP is bound by residues 22 to 26 (RGVVR) and 55 to 60 (RYSVSD). ATP contacts are provided by residues 73-74 (RF) and 103-106 (GDGS). D104 lines the Mg(2+) pocket. A substrate-binding site is contributed by 127–129 (TID). The active-site Proton acceptor is D129. R156 provides a ligand contact to ADP. Residues R164 and 171–173 (MGR) contribute to the substrate site. ADP-binding positions include 187 to 189 (GCE), K213, and 215 to 217 (KKH). Residues E224, R245, and 251 to 254 (HIQR) contribute to the substrate site.

Belongs to the phosphofructokinase type A (PFKA) family. ATP-dependent PFK group I subfamily. Prokaryotic clade 'B1' sub-subfamily. As to quaternary structure, homotetramer. Mg(2+) is required as a cofactor.

The protein resides in the cytoplasm. The catalysed reaction is beta-D-fructose 6-phosphate + ATP = beta-D-fructose 1,6-bisphosphate + ADP + H(+). Its pathway is carbohydrate degradation; glycolysis; D-glyceraldehyde 3-phosphate and glycerone phosphate from D-glucose: step 3/4. With respect to regulation, allosterically activated by ADP and other diphosphonucleosides, and allosterically inhibited by phosphoenolpyruvate. Catalyzes the phosphorylation of D-fructose 6-phosphate to fructose 1,6-bisphosphate by ATP, the first committing step of glycolysis. This Yersinia pseudotuberculosis serotype IB (strain PB1/+) protein is ATP-dependent 6-phosphofructokinase.